A 111-amino-acid chain; its full sequence is Cell division protein FtsB (111 aa).

At 1–3 (MGK) the chain is on the cytoplasmic side. A helical membrane pass occupies residues 4–21 (LTLLLLILLGWLQYSLWL). Residues 22 to 111 (GKNGIHDYVR…TNTPSNNIQR (90 aa)) lie on the Periplasmic side of the membrane. Residues 33-63 (KDDVVVQQGNNAKLKDRNEQLFAEIDDLNGG) adopt a coiled-coil conformation. A disordered region spans residues 90 to 111 (ESNHRNANTAPSTNTPSNNIQR). Residues 95-111 (NANTAPSTNTPSNNIQR) show a composition bias toward low complexity.

This sequence belongs to the FtsB family. As to quaternary structure, part of a complex composed of FtsB, FtsL and FtsQ.

Its subcellular location is the cell inner membrane. Functionally, essential cell division protein. May link together the upstream cell division proteins, which are predominantly cytoplasmic, with the downstream cell division proteins, which are predominantly periplasmic. In Pectobacterium carotovorum subsp. carotovorum (strain PC1), this protein is Cell division protein FtsB.